A 317-amino-acid chain; its full sequence is Pantothenate kinase (317 aa).

Residue Gly-95 to Ser-102 coordinates ATP.

The protein belongs to the prokaryotic pantothenate kinase family.

The protein resides in the cytoplasm. It catalyses the reaction (R)-pantothenate + ATP = (R)-4'-phosphopantothenate + ADP + H(+). Its pathway is cofactor biosynthesis; coenzyme A biosynthesis; CoA from (R)-pantothenate: step 1/5. The protein is Pantothenate kinase of Myxococcus xanthus (strain DK1622).